The following is a 256-amino-acid chain: Expansin-like B1 (256 aa).

The signal sequence occupies residues 1-24; it reads MAQLLRRHLPVILSLILFLSKATA. An N-linked (GlcNAc...) asparagine glycan is attached at Asn-27. The Expansin-like EG45 domain maps to 46–150; the sequence is NGACEYGAFG…RRVSCTYPNK (105 aa). One can recognise an Expansin-like CBD domain in the interval 164–249; sequence NYLEFEIWYQ…NWTAGATYDS (86 aa). N-linked (GlcNAc...) asparagine glycans are attached at residues Asn-189 and Asn-240.

It belongs to the expansin family. Expansin-like B subfamily.

The protein localises to the secreted. In Oryza sativa subsp. japonica (Rice), this protein is Expansin-like B1 (EXLB1).